Consider the following 599-residue polypeptide: Protein ECM25 (599 aa).

Positions 181-359 (NRLTPLAIRQ…NLLDFFPEIA (179 aa)) constitute a Rho-GAP domain. 3 disordered regions span residues 362 to 447 (ISSP…PLPI), 468 to 495 (ASSSTDTLSSPTKTPSADSLPLSNSSTD), and 543 to 563 (ELQEKKKKNETTSKTADKFSQ). 3 stretches are compositionally biased toward low complexity: residues 363–373 (SSPPSSVSSSS), 396–413 (TLPRSRSPSPQRSVTSPT), and 468–483 (ASSSTDTLSSPTKTPS). Positions 543-562 (ELQEKKKKNETTSKTADKFS) are enriched in basic and acidic residues.

It is found in the cytoplasm. May be involved in cell wall organization and biogenesis. The protein is Protein ECM25 (ECM25) of Saccharomyces cerevisiae (strain ATCC 204508 / S288c) (Baker's yeast).